The following is a 358-amino-acid chain: Aromatic amino acid aminotransferase (358 aa).

At lysine 219 the chain carries N6-(pyridoxal phosphate)lysine.

Belongs to the class-II pyridoxal-phosphate-dependent aminotransferase family. Homodimer. The cofactor is pyridoxal 5'-phosphate.

The catalysed reaction is an aromatic L-alpha-amino acid + 2-oxoglutarate = an aromatic oxo-acid + L-glutamate. Functionally, aminotransferase that catalyzes the conversion of aromatic amino acids and 2-oxoglutarate into corresponding aromatic oxo acids and L-glutamate. This chain is Aromatic amino acid aminotransferase, found in Nocardia farcinica (strain IFM 10152).